Reading from the N-terminus, the 248-residue chain is ATP synthase subunit a, chloroplastic (248 aa).

Helical transmembrane passes span alanine 37 to threonine 57, valine 96 to phenylalanine 116, isoleucine 135 to histidine 155, leucine 200 to leucine 220, and glycine 221 to glycine 241.

It belongs to the ATPase A chain family. F-type ATPases have 2 components, CF(1) - the catalytic core - and CF(0) - the membrane proton channel. CF(1) has five subunits: alpha(3), beta(3), gamma(1), delta(1), epsilon(1). CF(0) has four main subunits: a, b, b' and c.

The protein resides in the plastid. It localises to the chloroplast thylakoid membrane. Key component of the proton channel; it plays a direct role in the translocation of protons across the membrane. The polypeptide is ATP synthase subunit a, chloroplastic (Psilotum nudum (Whisk fern)).